Consider the following 361-residue polypeptide: Phospho-N-acetylmuramoyl-pentapeptide-transferase (361 aa).

10 consecutive transmembrane segments (helical) span residues 27-47 (ILASLTALIVGLLCGPLMIRW), 70-90 (GTPTMGGVLILLAITVSCLLW), 97-117 (SLWLVLLVTLANGLVGWVDDY), 134-154 (YFWQSVIALVAVSYLYWNASL), 167-187 (TVTWDLGVFFPVLAYFVIVGS), 199-219 (GLAIMPIVMVAGALGVFAYAS), 236-256 (TGELTIFCSSIVGAGLGFLWY), 263-283 (VFMGDVGSLALGAALGIVAVV), 288-308 (LVLLIMGGLFVIETLSVILQV), and 338-358 (KVIVRFWIITVVFVLCGLATL).

Belongs to the glycosyltransferase 4 family. MraY subfamily. The cofactor is Mg(2+).

Its subcellular location is the cell inner membrane. It carries out the reaction UDP-N-acetyl-alpha-D-muramoyl-L-alanyl-gamma-D-glutamyl-meso-2,6-diaminopimeloyl-D-alanyl-D-alanine + di-trans,octa-cis-undecaprenyl phosphate = di-trans,octa-cis-undecaprenyl diphospho-N-acetyl-alpha-D-muramoyl-L-alanyl-D-glutamyl-meso-2,6-diaminopimeloyl-D-alanyl-D-alanine + UMP. It participates in cell wall biogenesis; peptidoglycan biosynthesis. Catalyzes the initial step of the lipid cycle reactions in the biosynthesis of the cell wall peptidoglycan: transfers peptidoglycan precursor phospho-MurNAc-pentapeptide from UDP-MurNAc-pentapeptide onto the lipid carrier undecaprenyl phosphate, yielding undecaprenyl-pyrophosphoryl-MurNAc-pentapeptide, known as lipid I. This chain is Phospho-N-acetylmuramoyl-pentapeptide-transferase, found in Legionella pneumophila subsp. pneumophila (strain Philadelphia 1 / ATCC 33152 / DSM 7513).